The following is a 122-amino-acid chain: Acidic phospholipase A2 (122 aa).

Cystine bridges form between Cys26-Cys115, Cys28-Cys44, Cys43-Cys95, Cys49-Cys122, Cys50-Cys88, Cys57-Cys81, and Cys75-Cys86. 3 residues coordinate Ca(2+): Tyr27, Gly29, and Gly31. His47 is a catalytic residue. Ca(2+) is bound at residue Asp48. Asp89 is a catalytic residue.

As to quaternary structure, may form tetramers. Ca(2+) is required as a cofactor. In terms of tissue distribution, expressed by the venom gland.

The protein localises to the secreted. It catalyses the reaction a 1,2-diacyl-sn-glycero-3-phosphocholine + H2O = a 1-acyl-sn-glycero-3-phosphocholine + a fatty acid + H(+). Functionally, PLA2 catalyzes the calcium-dependent hydrolysis of the 2-acyl groups in 3-sn-phosphoglycerides. In vivo, is non-lethal to mice when intravenously injected up to a concentration of 30 ug, however does show significant edematogenic activity at the injection site. The chain is Acidic phospholipase A2 from Lachesis acrochorda (Chocoan bushmaster).